The primary structure comprises 140 residues: Ribosomal RNA large subunit methyltransferase H (140 aa).

Residues Leu-55 and Gly-87 each contribute to the S-adenosyl-L-methionine site.

This sequence belongs to the RNA methyltransferase RlmH family. Homodimer.

The protein localises to the cytoplasm. It carries out the reaction pseudouridine(1915) in 23S rRNA + S-adenosyl-L-methionine = N(3)-methylpseudouridine(1915) in 23S rRNA + S-adenosyl-L-homocysteine + H(+). In terms of biological role, specifically methylates the pseudouridine at position 1915 (m3Psi1915) in 23S rRNA. The polypeptide is Ribosomal RNA large subunit methyltransferase H (Rhizorhabdus wittichii (strain DSM 6014 / CCUG 31198 / JCM 15750 / NBRC 105917 / EY 4224 / RW1) (Sphingomonas wittichii)).